A 486-amino-acid chain; its full sequence is Sensor protein PhoQ (486 aa).

Residues 1-16 (MKKLLHLFFPLSLRVR) are Cytoplasmic-facing. A helical transmembrane segment spans residues 17 to 37 (FLLATAAVVLVLSLAYGMVAL). The Periplasmic segment spans residues 38–194 (IGYSVSFDKT…LKSSYMVWSW (157 aa)). Residues Asp151 and Asp152 each coordinate a divalent metal cation. The chain crosses the membrane as a helical span at residues 195–215 (FIYVLSANLLLVIPLLWVAAW). The region spanning 215-266 (WWSLRPIEALAKEVRELEEHNRELLNPATTRELTSLVRNLNRLLKSERERYD) is the HAMP domain. Topologically, residues 216–486 (WSLRPIEALA…GRQHSAPKDE (271 aa)) are cytoplasmic. Positions 274–480 (DLTHSLKTPL…RMEVIFGRQH (207 aa)) constitute a Histidine kinase domain. A Phosphohistidine; by autocatalysis modification is found at His277. Asn385 is a binding site for Mg(2+). ATP-binding positions include 385-393 (NVLDNACKY), 415-420 (DDGPGI), and 434-446 (RVDT…GVGL). Gln442 serves as a coordination point for Mg(2+).

In terms of assembly, homodimer.

It is found in the cell inner membrane. The catalysed reaction is ATP + protein L-histidine = ADP + protein N-phospho-L-histidine.. Member of the two-component regulatory system PhoP/PhoQ involved in virulence, adaptation to low Mg(2+) environments and the control of acid resistance genes. In low periplasmic Mg(2+), PhoQ functions as a membrane-associated protein kinase that undergoes autophosphorylation and subsequently transfers the phosphate to PhoP, resulting in the expression of PhoP-activated genes (PAG) and repression of PhoP-repressed genes (PRG). In high periplasmic Mg(2+), acts as a protein phosphatase that dephosphorylates phospho-PhoP, which results in the repression of PG and may lead to expression of some PRG. This is Sensor protein PhoQ (phoQ) from Escherichia coli O6:H1 (strain CFT073 / ATCC 700928 / UPEC).